The following is a 325-amino-acid chain: tRNA(Ile)-lysidine synthase (325 aa).

Residue Ser34–Ser39 participates in ATP binding.

This sequence belongs to the tRNA(Ile)-lysidine synthase family.

It localises to the cytoplasm. It carries out the reaction cytidine(34) in tRNA(Ile2) + L-lysine + ATP = lysidine(34) in tRNA(Ile2) + AMP + diphosphate + H(+). Ligates lysine onto the cytidine present at position 34 of the AUA codon-specific tRNA(Ile) that contains the anticodon CAU, in an ATP-dependent manner. Cytidine is converted to lysidine, thus changing the amino acid specificity of the tRNA from methionine to isoleucine. The chain is tRNA(Ile)-lysidine synthase from Rhodococcus opacus (strain B4).